The sequence spans 212 residues: ER lumen protein-retaining receptor 1 (212 aa).

Over 1-4 (MNIF) the chain is Lumenal. The helical transmembrane segment at 5-24 (RFLGDISHLSAILILLLKIW) threads the bilayer. Residues 25–32 (KSRSCAGI) lie on the Cytoplasmic side of the membrane. Residues 33–52 (SGKSQLLFAIVFTTRYLDLF) traverse the membrane as a helical segment. The tract at residues 47 to 48 (RY) is interaction with the K-D-E-L motif on target proteins. The Lumenal portion of the chain corresponds to 53–58 (TNFISL). Residues 59–79 (YNTSMKMVYVASSYATIWMIY) traverse the membrane as a helical segment. Over 80–92 (SKFKATYDGNHDT) the chain is Cytoplasmic. Residues 93–110 (FRVEFLIVPTAILAFLVN) form a helical membrane-spanning segment. Residues 111–116 (HDFTPL) are Lumenal-facing. Residues 117-135 (EILWTFSIYLESVAILPQL) traverse the membrane as a helical segment. Residues 136-149 (FMVSKTGEAETITS) lie on the Cytoplasmic side of the membrane. The chain crosses the membrane as a helical span at residues 150–168 (HYLFALGIYRALYLFNWIW). The segment at 159–169 (RALYLFNWIWR) is interaction with the K-D-E-L motif on target proteins. At 169 to 178 (RYQFEGFFDL) the chain is on the lumenal side. Residues 179 to 199 (IAIVAGLVQTVLYCDFFYLYI) traverse the membrane as a helical segment. Topologically, residues 200–212 (TKVLKGKKLSLPA) are cytoplasmic. The tract at residues 204–207 (KGKK) is important for recycling of cargo proteins with the sequence motif K-D-E-L from the Golgi to the endoplasmic reticulum.

It belongs to the ERD2 family.

The protein resides in the golgi apparatus membrane. Its subcellular location is the cytoplasmic vesicle. The protein localises to the COPI-coated vesicle membrane. It localises to the endoplasmic reticulum membrane. It is found in the endoplasmic reticulum-Golgi intermediate compartment membrane. In terms of biological role, receptor for the C-terminal sequence motif K-D-E-L that is present on endoplasmic reticulum resident proteins and that mediates their recycling from the Golgi back to the endoplasmic reticulum. The sequence is that of ER lumen protein-retaining receptor 1 (kdelr1) from Xenopus tropicalis (Western clawed frog).